Reading from the N-terminus, the 878-residue chain is DNA mismatch repair protein MutS (878 aa).

Position 630 to 637 (630 to 637 (GPNMAGKS)) interacts with ATP.

This sequence belongs to the DNA mismatch repair MutS family.

In terms of biological role, this protein is involved in the repair of mismatches in DNA. It is possible that it carries out the mismatch recognition step. This protein has a weak ATPase activity. The protein is DNA mismatch repair protein MutS of Chlorobaculum tepidum (strain ATCC 49652 / DSM 12025 / NBRC 103806 / TLS) (Chlorobium tepidum).